The following is a 147-amino-acid chain: Deoxyuridine 5'-triphosphate nucleotidohydrolase (147 aa).

Substrate-binding positions include 67–69, Asn80, and 84–86; these read RSG and TID.

This sequence belongs to the dUTPase family. Mg(2+) serves as cofactor.

The catalysed reaction is dUTP + H2O = dUMP + diphosphate + H(+). The protein operates within pyrimidine metabolism; dUMP biosynthesis; dUMP from dCTP (dUTP route): step 2/2. Functionally, this enzyme is involved in nucleotide metabolism: it produces dUMP, the immediate precursor of thymidine nucleotides and it decreases the intracellular concentration of dUTP so that uracil cannot be incorporated into DNA. This Anaeromyxobacter dehalogenans (strain 2CP-C) protein is Deoxyuridine 5'-triphosphate nucleotidohydrolase.